A 97-amino-acid polypeptide reads, in one-letter code: MKRICSIYKSPRKNEMYLYVLKAEGLERVPEALLPFFGTPVHAFDLVLSPERKLAREDIVKVLDNLENQGYHLQMPPAEDEYIEHLPEELLRRNDPV.

The 85-residue stretch at 3-87 (RICSIYKSPR…AEDEYIEHLP (85 aa)) folds into the YcgL domain.

This Pseudomonas putida (strain W619) protein is YcgL domain-containing protein PputW619_3899.